Here is a 324-residue protein sequence, read N- to C-terminus: NADH-quinone oxidoreductase subunit H (324 aa).

A run of 8 helical transmembrane segments spans residues 11-31 (ILIT…CGAF), 81-101 (VIFT…FAIV), 114-134 (IGIL…LFAG), 154-174 (VSYE…AGSF), 186-206 (LWNV…GVAV), 237-257 (FFVG…TLFF), 265-285 (LPPF…FILI), and 304-324 (VCLP…LYNA).

The protein belongs to the complex I subunit 1 family. In terms of assembly, NDH-1 is composed of 13 different subunits. Subunits NuoA, H, J, K, L, M, N constitute the membrane sector of the complex.

The protein localises to the cell inner membrane. The catalysed reaction is a quinone + NADH + 5 H(+)(in) = a quinol + NAD(+) + 4 H(+)(out). In terms of biological role, NDH-1 shuttles electrons from NADH, via FMN and iron-sulfur (Fe-S) centers, to quinones in the respiratory chain. The immediate electron acceptor for the enzyme in this species is believed to be ubiquinone. Couples the redox reaction to proton translocation (for every two electrons transferred, four hydrogen ions are translocated across the cytoplasmic membrane), and thus conserves the redox energy in a proton gradient. This subunit may bind ubiquinone. This is NADH-quinone oxidoreductase subunit H from Pectobacterium atrosepticum (strain SCRI 1043 / ATCC BAA-672) (Erwinia carotovora subsp. atroseptica).